The following is a 612-amino-acid chain: MLEGLGSPASPRAAASASVAGSSGPAACSPPSSSAPRSPESPAPRRGGVRASVPQKLAEMLSSQYGLIVFVAGLLLLLAWAVHAAGVSKSDLLCFLTALMLLQLLWMLWYVGRSSAHRRLFRLKDTHAGAGWLRGSITLFAVITVILGCLKIGYFIGFSECLSATEGVFPVTHSVHTLLQVYFLWGHAKDIIQSFKTLERFGVIHSVFTNLLLWANGVLNESKHQLNEHKERLITLGFGNITTVLDDHTPQCNCTPPTLCTAISHGIYYLYPFNIEYQILASTMLYVLWKNIGRKVDSHQHQKMQFKSDGVMVGAVLGLTVLAATIAVVVVYLIHIGRSKTKSESALIMFYLYAITLLMLMGAAGLAGIRIYRIDEKSLDESKNPARKLDSDLLVGTASGSWLISWGSILAILCAEGHPRYTWYNLPYSILAIVEKYIQNLFIFESIHREPEKLSEDIQTLRVVTVCNGNTMPLASSCPKSGGVARDVAPQGKDMPPAANGNVCMRESHDKEEEKQEESSWGGSPSPVRLPRFLQGNAKRKVLRNIAAFLFLCNISLWIPPAFGCRPEYDNGLEEIVFGFEPWIIVVNLAMPFSIFYRMHAAASLFEVYCKI.

Low complexity predominate over residues 1–46 (MLEGLGSPASPRAAASASVAGSSGPAACSPPSSSAPRSPESPAPRR). The disordered stretch occupies residues 1-50 (MLEGLGSPASPRAAASASVAGSSGPAACSPPSSSAPRSPESPAPRRGGVR). The Cytoplasmic segment spans residues 1-58 (MLEGLGSPASPRAAASASVAGSSGPAACSPPSSSAPRSPESPAPRRGGVRASVPQKLA). A helical transmembrane segment spans residues 59–80 (EMLSSQYGLIVFVAGLLLLLAW). Topologically, residues 81–88 (AVHAAGVS) are extracellular. Residues 89–112 (KSDLLCFLTALMLLQLLWMLWYVG) form a helical membrane-spanning segment. Residues 113-130 (RSSAHRRLFRLKDTHAGA) are Cytoplasmic-facing. A helical membrane pass occupies residues 131-153 (GWLRGSITLFAVITVILGCLKIG). At 154 to 163 (YFIGFSECLS) the chain is on the extracellular side. Residues 164–188 (ATEGVFPVTHSVHTLLQVYFLWGHA) form a helical membrane-spanning segment. At 189-196 (KDIIQSFK) the chain is on the cytoplasmic side. The helical transmembrane segment at 197 to 223 (TLERFGVIHSVFTNLLLWANGVLNESK) threads the bilayer. Residues 224–264 (HQLNEHKERLITLGFGNITTVLDDHTPQCNCTPPTLCTAIS) are Extracellular-facing. The chain crosses the membrane as a helical span at residues 265-290 (HGIYYLYPFNIEYQILASTMLYVLWK). The Cytoplasmic portion of the chain corresponds to 291–311 (NIGRKVDSHQHQKMQFKSDGV). Residues 312–334 (MVGAVLGLTVLAATIAVVVVYLI) form a helical membrane-spanning segment. The Extracellular portion of the chain corresponds to 335–344 (HIGRSKTKSE). The helical transmembrane segment at 345-370 (SALIMFYLYAITLLMLMGAAGLAGIR) threads the bilayer. The Cytoplasmic portion of the chain corresponds to 371–388 (IYRIDEKSLDESKNPARK). The helical transmembrane segment at 389–413 (LDSDLLVGTASGSWLISWGSILAIL) threads the bilayer. Over 414–423 (CAEGHPRYTW) the chain is Extracellular. The helical transmembrane segment at 424–444 (YNLPYSILAIVEKYIQNLFIF) threads the bilayer. The Cytoplasmic portion of the chain corresponds to 445–544 (ESIHREPEKL…QGNAKRKVLR (100 aa)). The segment at 499–525 (ANGNVCMRESHDKEEEKQEESSWGGSP) is disordered. Over residues 506-518 (RESHDKEEEKQEE) the composition is skewed to basic and acidic residues. Residues 545–563 (NIAAFLFLCNISLWIPPAF) traverse the membrane as a helical segment. The Extracellular segment spans residues 564–581 (GCRPEYDNGLEEIVFGFE). Residues 582–605 (PWIIVVNLAMPFSIFYRMHAAASL) traverse the membrane as a helical segment. Residues 606-612 (FEVYCKI) lie on the Cytoplasmic side of the membrane.

Belongs to the otopetrin family. As to quaternary structure, homodimer. Interacts with STAT1, independently of STAT1 phosphorylation status.

The protein resides in the cell membrane. Its subcellular location is the cell projection. It localises to the microvillus. The catalysed reaction is H(+)(in) = H(+)(out). With respect to regulation, activated by both acid and alkali, with proton influx in response to extracellular acid and proton efflux during alkali stimulation. Inhibited by Zn(2+); this inhibition is thought to be pH-sensitive. Currents evoked in response to mild acid (pH 6.0) stimulus may also be mildly potentiated by exposure to Zn(2+). Activated by NH(4)Cl. Proton-selective ion channel. Biphasically modulated by acid and alkali, mediating proton influx and efflux in response to extracellular acid and base stimulation, respectively. Sour taste receptor, which carries inward currents in response to extracellular acidification. Sensor for ammonium chloride (NH(4)Cl) in taste receptor cells. NH(4)Cl acts by increasing the intracellular pH, thereby generating a driving force for proton entry through OTOP1 channel. Might also participate in alkaline sensation. Plays a role in the regulation of Ca(2+) flux in response to purigenic (ATP, ADP and UDP) stimuli, leading to increase in cytosolic Ca(2+) due to influx of extracellular calcium. May play this role by inhibiting P2Y purinoceptor-mediated Ca(2+) release in a Ca(2+)-dependent manner and promote an influx of Ca(2+) in response to ATP. Through this mechanism and possibly others, plays a role in the formation and function of calcium carbonate-based structures in the vestibular system of the inner ear, called otoconia, that sense gravity and linear acceleration. In obesity, may attenuate adipose tissue inflammation, through the negative regulation of IFNG signaling, hence may play an adaptive role in the maintainance of metabolic homeostasis. Following alkali activation, may also be permeable Na(+), K(+), Cs(+) and Li(+). The chain is Proton channel OTOP1 from Homo sapiens (Human).